Consider the following 364-residue polypeptide: Fructose-bisphosphate aldolase C (364 aa).

At Tyr-5 the chain carries Phosphotyrosine. Residues Ser-36, Ser-39, and Ser-45 each carry the phosphoserine modification. Substrate is bound at residue Arg-56. Lys-111 carries the post-translational modification N6-acetyllysine. The residue at position 132 (Ser-132) is a Phosphoserine. A substrate-binding site is contributed by Lys-147. Glu-188 serves as the catalytic Proton acceptor. Lys-230 (schiff-base intermediate with dihydroxyacetone-P) is an active-site residue.

The protein belongs to the class I fructose-bisphosphate aldolase family. In terms of assembly, homotetramer. Interacts with ATP6V1E1.

The enzyme catalyses beta-D-fructose 1,6-bisphosphate = D-glyceraldehyde 3-phosphate + dihydroxyacetone phosphate. Its pathway is carbohydrate degradation; glycolysis; D-glyceraldehyde 3-phosphate and glycerone phosphate from D-glucose: step 4/4. The sequence is that of Fructose-bisphosphate aldolase C (ALDOC) from Macaca fascicularis (Crab-eating macaque).